Here is a 75-residue protein sequence, read N- to C-terminus: Translation initiation factor IF-1 (75 aa).

One can recognise an S1-like domain in the interval 1 to 75 (MANLPKEQKL…SKGRIVYRFK (75 aa)).

It belongs to the IF-1 family. As to quaternary structure, component of the 30S ribosomal translation pre-initiation complex which assembles on the 30S ribosome in the order IF-2 and IF-3, IF-1 and N-formylmethionyl-tRNA(fMet); mRNA recruitment can occur at any time during PIC assembly.

It localises to the cytoplasm. One of the essential components for the initiation of protein synthesis. Stabilizes the binding of IF-2 and IF-3 on the 30S subunit to which N-formylmethionyl-tRNA(fMet) subsequently binds. Helps modulate mRNA selection, yielding the 30S pre-initiation complex (PIC). Upon addition of the 50S ribosomal subunit IF-1, IF-2 and IF-3 are released leaving the mature 70S translation initiation complex. This Mesomycoplasma hyopneumoniae (strain 232) (Mycoplasma hyopneumoniae) protein is Translation initiation factor IF-1.